A 317-amino-acid polypeptide reads, in one-letter code: Tegument protein UL14 homolog (317 aa).

Positions 166 to 291 are disordered; it reads IAADPHSPRS…QKWLGGIPPL (126 aa). Residues 182–195 show a composition bias toward basic and acidic residues; the sequence is KAPEDARCGARKPG. A compositionally biased stretch (polar residues) spans 198 to 211; it reads NNYTPSAQPRSQET. Composition is skewed to basic and acidic residues over residues 217–236 and 249–265; these read ASPD…EHHS and SERR…KSSE.

The protein belongs to the alphaherpesvirinae HHV-1 UL14 protein family.

It is found in the virion tegument. It localises to the host cytoplasm. Its subcellular location is the host nucleus. Contributes to the nuclear transport of the viral transcriptional activator VP16 during the early phase of infection. Therefore, participates indirectly in the regulation of the immediate-early gene expression. Additionally, seems to be important for efficient nuclear targeting of capsids. This Equus caballus (Horse) protein is Tegument protein UL14 homolog.